Reading from the N-terminus, the 435-residue chain is Serine/threonine-protein kinase 40 (435 aa).

Basic and acidic residues predominate over residues M1 to A10. The disordered stretch occupies residues M1–S25. In terms of domain architecture, Protein kinase spans F35–I332. ATP is bound by residues L41 to I49 and K66. The active-site Proton acceptor is the D197.

Belongs to the protein kinase superfamily. CAMK Ser/Thr protein kinase family.

Its subcellular location is the nucleus. The protein resides in the cytoplasm. The enzyme catalyses L-seryl-[protein] + ATP = O-phospho-L-seryl-[protein] + ADP + H(+). The catalysed reaction is L-threonyl-[protein] + ATP = O-phospho-L-threonyl-[protein] + ADP + H(+). May be a negative regulator of NF-kappa-B and p53-mediated gene transcription. This Pongo abelii (Sumatran orangutan) protein is Serine/threonine-protein kinase 40 (STK40).